Here is a 585-residue protein sequence, read N- to C-terminus: Protein FAM13C (585 aa).

Disordered regions lie at residues 26 to 45, 83 to 138, and 171 to 216; these read PVSLHEDQTDCSSLRDENNK, SMGN…NAFK, and EAAQ…APED. 2 stretches are compositionally biased toward basic and acidic residues: residues 27-45 and 99-112; these read VSLHEDQTDCSSLRDENNK and ESGRSHGESQETEH. Ser131 is subject to Phosphoserine. Ser238 carries the post-translational modification Phosphoserine. 3 disordered regions span residues 250 to 282, 349 to 391, and 441 to 477; these read FNLDPESAPSPPSTQQFMMPRSSSRCSCGDGKE, EEQG…EETP, and IPTIQEEEDSDEDRPQGSQQPSLADPASHLPVGDHLT. A compositionally biased stretch (polar residues) spans 262 to 275; the sequence is STQQFMMPRSSSRC. 2 positions are modified to phosphoserine: Ser385 and Ser386.

This sequence belongs to the FAM13 family.

The protein is Protein FAM13C (FAM13C) of Homo sapiens (Human).